A 498-amino-acid polypeptide reads, in one-letter code: ATP synthase subunit beta, chloroplastic (498 aa).

A Phosphothreonine modification is found at Thr-6. Ser-13 bears the Phosphoserine mark. ATP is bound at residue 172-179; sequence GGAGVGKT.

Belongs to the ATPase alpha/beta chains family. F-type ATPases have 2 components, CF(1) - the catalytic core - and CF(0) - the membrane proton channel. CF(1) has five subunits: alpha(3), beta(3), gamma(1), delta(1), epsilon(1). CF(0) has four main subunits: a(1), b(1), b'(1) and c(9-12).

It localises to the plastid. The protein localises to the chloroplast thylakoid membrane. It catalyses the reaction ATP + H2O + 4 H(+)(in) = ADP + phosphate + 5 H(+)(out). Its function is as follows. Produces ATP from ADP in the presence of a proton gradient across the membrane. The catalytic sites are hosted primarily by the beta subunits. In Raphanus sativus (Radish), this protein is ATP synthase subunit beta, chloroplastic.